The following is a 604-amino-acid chain: MCGIMGAVSERDISKILLEGLRRLEYRGYDSAGIAVIDSQDRLKRVRIQGKVQNLADAMQETAIAGNTGIAHTRWATHGKPSEQNAHPHLSHGEIALVHNGIIENHEHLRQQLITYGYQFTSETDTEVAAHLIHYHYQQHENLLLAVQKAAAEMQGAFALGVIHQKRPEELVAIRKGSPLVLGFGIGENFIASDALALRSFAQSVIYMEEGDSACVTTQDIKVYDSNRILVQRAVHPLNSDSEIVNKGPYRHFMLKEIFEQSKVITDTLESRINSIDVLRASFGEKASHIFPMVKNIHIVACGTSYHAGMIAKYWLESLAGLPTQVEIASEYRYRDVVVPDNTLFITVSQSGETADTLAALFKAKQSNYLASLAICNVATSTLVREADCVFLTRAGIEIGVASTKAFTTQLAAFLMLAAALCKDNRAQEVLRQLQELPACCERVLQMNEEVESLASLFVNKVHALFLGRGVQYPVALEGALKLKEISYIHAEAYPAGELKHGPLALVDKDMPVIAVAPNDELLDKLKSNLHEVSARGGQLFVFVDDSQNWKANGARLIKVPSCGAWLAPIVYTIPLQLLAYHVAVAKGTDVDQPRNLAKSVTVE.

C2 serves as the catalytic Nucleophile; for GATase activity. Residues C2 to Q219 enclose the Glutamine amidotransferase type-2 domain. 2 consecutive SIS domains span residues L279–A427 and L454–P594. K599 (for Fru-6P isomerization activity) is an active-site residue.

Homodimer.

Its subcellular location is the cytoplasm. The catalysed reaction is D-fructose 6-phosphate + L-glutamine = D-glucosamine 6-phosphate + L-glutamate. In terms of biological role, catalyzes the first step in hexosamine metabolism, converting fructose-6P into glucosamine-6P using glutamine as a nitrogen source. This Legionella pneumophila (strain Paris) protein is Glutamine--fructose-6-phosphate aminotransferase [isomerizing].